The following is a 117-amino-acid chain: MNNIIKMLNDEQMKTDVPDFGAGDTVVVQVRVKEGEKERLQAFEGLVIAKRNRGLHSAFTVRKISNGEGVERAFQTHSPLIASIEVKRRGRVRRAKLYYLRERSGKSARIREKLGTK.

The protein belongs to the bacterial ribosomal protein bL19 family.

This protein is located at the 30S-50S ribosomal subunit interface and may play a role in the structure and function of the aminoacyl-tRNA binding site. The chain is Large ribosomal subunit protein bL19 from Shewanella denitrificans (strain OS217 / ATCC BAA-1090 / DSM 15013).